A 911-amino-acid polypeptide reads, in one-letter code: Alpha-actinin-4 (911 aa).

Residues methionine 1 to serine 269 are actin-binding. Residues glutamine 12–glycine 26 are interaction with VCL. Tyrosine 31 bears the Phosphotyrosine mark. The tract at residues arginine 40 to asparagine 61 is interaction with VCL. 2 Calponin-homology (CH) domains span residues lysine 50–alanine 154 and threonine 163–serine 269. An LXXLL motif motif is present at residues leucine 84–leucine 88. The interaction with VCL stretch occupies residues lysine 108–leucine 126. At lysine 114 the chain carries N6-acetyllysine. The segment at threonine 177–tryptophan 192 is polyphosphoinositide (PIP2)-binding. At lysine 214 the chain carries N6-acetyllysine. The residue at position 249 (threonine 249) is a Phosphothreonine. 4 Spectrin repeats span residues histidine 293–asparagine 403, histidine 413–lysine 518, glutamine 528–glutamate 639, and histidine 649–asparagine 752. An N6-acetyllysine mark is found at lysine 592 and lysine 625. The residue at position 696 (serine 696) is a Phosphoserine. Residues tryptophan 736 to leucine 911 form a mediates interaction with MICALL2 region. EF-hand domains follow at residues glutamate 765 to aspartate 800 and glutamine 806 to aspartate 841. Residue aspartate 778 participates in Ca(2+) binding. Lysine 779 carries the N6-acetyllysine modification. Ca(2+) contacts are provided by aspartate 780 and glutamate 789. N6-acetyllysine is present on lysine 859. Serine 909 carries the post-translational modification Phosphoserine.

This sequence belongs to the alpha-actinin family. As to quaternary structure, homodimer; antiparallel. Binds TRIM3 at the N-terminus. Interacts with MICALL2 (preferentially in opened conformation); stimulated by RAB13 activation. Identified in a complex with CASK, IQGAP1, MAGI2, NPHS1, SPTAN1 and SPTBN1. Identified in a IGF2BP1-dependent mRNP granule complex containing untranslated mRNAs. Component of the CART complex, at least composed of ACTN4, HGS/HRS, MYO5B and TRIM3. Interacts with MAGI1. Interacts with PDLIM2. Interacts with PPARG and RARA. Binds to VCL; this interaction triggers VCL conformational changes. Interacts with SEPTIN14. Interacts with IGSF8. In terms of tissue distribution, widely expressed.

The protein resides in the nucleus. Its subcellular location is the cytoplasm. The protein localises to the cell junction. It localises to the cytoskeleton. It is found in the stress fiber. The protein resides in the perinuclear region. In terms of biological role, F-actin cross-linking protein which is thought to anchor actin to a variety of intracellular structures. This is a bundling protein. Probably involved in vesicular trafficking via its association with the CART complex. The CART complex is necessary for efficient transferrin receptor recycling but not for EGFR degradation. Involved in tight junction assembly in epithelial cells probably through interaction with MICALL2. Links MICALL2 to the actin cytoskeleton and recruits it to the tight junctions. May also function as a transcriptional coactivator, stimulating transcription mediated by the nuclear hormone receptors PPARG and RARA. Association with IGSF8 regulates the immune synapse formation and is required for efficient T-cell activation. The protein is Alpha-actinin-4 of Homo sapiens (Human).